The following is a 121-amino-acid chain: UPF0102 protein DSY2577 (121 aa).

It belongs to the UPF0102 family.

This chain is UPF0102 protein DSY2577, found in Desulfitobacterium hafniense (strain Y51).